A 599-amino-acid polypeptide reads, in one-letter code: Sulfite reductase [NADPH] flavoprotein alpha-component (599 aa).

Residues 64 to 202 enclose the Flavodoxin-like domain; it reads VTLISASQTG…AASEWRARVV (139 aa). FMN-binding positions include 70 to 75, 117 to 120, and 153 to 162; these read SQTGNA, STQG, and LGDTSYEFFC. The region spanning 234-448 is the FAD-binding FR-type domain; the sequence is DAPLIATLSV…IEHNDNFRLP (215 aa). Residues Thr-322, Ala-356, 386-389, 404-406, Tyr-410, and 419-422 each bind FAD; these read RLYS, TVG, and GGAS. NADP(+) is bound by residues 519-520, 525-529, and Asp-561; these read SR and KIYVQ. Tyr-599 lines the FAD pocket.

It belongs to the NADPH-dependent sulphite reductase flavoprotein subunit CysJ family. The protein in the N-terminal section; belongs to the flavodoxin family. In the C-terminal section; belongs to the flavoprotein pyridine nucleotide cytochrome reductase family. As to quaternary structure, alpha(8)-beta(8). The alpha component is a flavoprotein, the beta component is a hemoprotein. It depends on FAD as a cofactor. The cofactor is FMN.

It carries out the reaction hydrogen sulfide + 3 NADP(+) + 3 H2O = sulfite + 3 NADPH + 4 H(+). It functions in the pathway sulfur metabolism; hydrogen sulfide biosynthesis; hydrogen sulfide from sulfite (NADPH route): step 1/1. In terms of biological role, component of the sulfite reductase complex that catalyzes the 6-electron reduction of sulfite to sulfide. This is one of several activities required for the biosynthesis of L-cysteine from sulfate. The flavoprotein component catalyzes the electron flow from NADPH -&gt; FAD -&gt; FMN to the hemoprotein component. This is Sulfite reductase [NADPH] flavoprotein alpha-component from Salmonella typhimurium (strain LT2 / SGSC1412 / ATCC 700720).